The following is a 405-amino-acid chain: MSTSFMKSPRLFFTSESVTEGHPDKICDQVSDAVLDAFLTHDPRARVACETATTTGLIVVIGEVTYEQGYIPIEEIVRKTVKDIGYTDASYGFDADTCGVMVAIHGQSPDIAQGVDRALEVRGDGYVTDEEVATIGAGDQGMMFGFACNETPELMPLPIALAHRIGRRLSRLRKEGVLPYLRPDGKSQVTVEYSYGRPVRVDTVLVSNQHAPDVTQDQIRHDIIHQVIHAVVPPELIDEKTKYFVNPTGRFVIGGPMGDSGLTGRKIIVDTYGGMARHGGGAFSGKDPTKVDRSAAYACRWVAKNVVAAGLADRFEIQVAYAIGVAHPLSISVECFGTNKVSEETILRLINEHFDLRPGAIIRDLRLRRPIYRPTAAYGHFGRDDIDAPWEQTDRAEALRRAAGL.

An ATP-binding site is contributed by His-22. Asp-24 serves as a coordination point for Mg(2+). Position 50 (Glu-50) interacts with K(+). The L-methionine site is built by Glu-63 and Gln-107. The interval 107–117 is flexible loop; the sequence is QSPDIAQGVDR. ATP is bound by residues 184–186, 250–251, Asp-259, 265–266, Ala-282, and Lys-286; these read DGK, RF, and RK. Position 259 (Asp-259) interacts with L-methionine. Residue Lys-290 coordinates L-methionine.

Belongs to the AdoMet synthase family. As to quaternary structure, homotetramer; dimer of dimers. Mg(2+) is required as a cofactor. K(+) serves as cofactor.

Its subcellular location is the cytoplasm. The enzyme catalyses L-methionine + ATP + H2O = S-adenosyl-L-methionine + phosphate + diphosphate. It participates in amino-acid biosynthesis; S-adenosyl-L-methionine biosynthesis; S-adenosyl-L-methionine from L-methionine: step 1/1. Its function is as follows. Catalyzes the formation of S-adenosylmethionine (AdoMet) from methionine and ATP. The overall synthetic reaction is composed of two sequential steps, AdoMet formation and the subsequent tripolyphosphate hydrolysis which occurs prior to release of AdoMet from the enzyme. In Roseiflexus sp. (strain RS-1), this protein is S-adenosylmethionine synthase.